A 91-amino-acid polypeptide reads, in one-letter code: DNA-directed RNA polymerase subunit omega (91 aa).

It belongs to the RNA polymerase subunit omega family. In terms of assembly, the RNAP catalytic core consists of 2 alpha, 1 beta, 1 beta' and 1 omega subunit. When a sigma factor is associated with the core the holoenzyme is formed, which can initiate transcription.

The catalysed reaction is RNA(n) + a ribonucleoside 5'-triphosphate = RNA(n+1) + diphosphate. Its function is as follows. Promotes RNA polymerase assembly. Latches the N- and C-terminal regions of the beta' subunit thereby facilitating its interaction with the beta and alpha subunits. The protein is DNA-directed RNA polymerase subunit omega of Syntrophus aciditrophicus (strain SB).